Reading from the N-terminus, the 288-residue chain is Fibroblast growth factor 2 (288 aa).

The segment at 1–133 is disordered; that stretch reads MVGVGGGDVE…RGSRPGPAGT (133 aa). The propeptide at 1–142 is or 93, or 124, or 125, or 131, or 161; sequence MVGVGGGDVE…TMAAGSITTL (142 aa). The segment covering 52–64 has biased composition (low complexity); sequence SVNPRSRAAGSPR. Over residues 68–84 the composition is skewed to basic and acidic residues; the sequence is RRTEERPSGSRLGDRGR. Residues Arg-108, Arg-110, and Arg-112 each carry the omega-N-methylarginine; alternate modification. Symmetric dimethylarginine; alternate is present on residues Arg-108, Arg-110, and Arg-112. Residues 113-132 are compositionally biased toward low complexity; sequence GTAAPRAAPAARGSRPGPAG. Asn-169 contacts heparin. Positions 179-181 match the Cell attachment site; atypical motif; sequence DGR. Tyr-215 carries the post-translational modification Phosphotyrosine; by TEC. The Cell attachment site; atypical motif lies at 221–223; that stretch reads DGR. Residue Lys-228 forms a Glycyl lysine isopeptide (Lys-Gly) (interchain with G-Cter in SUMO1) linkage. The tract at residues 261 to 277 is heparin-binding; that stretch reads KRTGQYKLGSKTGPGQK.

The protein belongs to the heparin-binding growth factors family. As to quaternary structure, monomer. Homodimer. Interacts with FGFR1, FGFR2, FGFR3 and FGFR4. Affinity between fibroblast growth factors (FGFs) and their receptors is increased by heparan sulfate glycosaminoglycans that function as coreceptors. Interacts with CSPG4, FGFBP1 and TEC. Found in a complex with FGFBP1, FGF1 and FGF2. Interacts with FGFBP3. Interacts with integrin ITGAV:ITGB3; the interaction is required for FGF2 signaling. Interacts with SNORC (via the extracellular domain). Interacts with glypican GPC3. Phosphorylation at Tyr-215 regulates FGF2 unconventional secretion. Post-translationally, several N-termini starting at positions 94, 125, 126, 132, 143 and 162 have been identified by direct sequencing. Expressed in granulosa and cumulus cells. Expressed in hepatocellular carcinoma cells, but not in non-cancerous liver tissue.

It localises to the secreted. The protein localises to the nucleus. Acts as a ligand for FGFR1, FGFR2, FGFR3 and FGFR4. Also acts as an integrin ligand which is required for FGF2 signaling. Binds to integrin ITGAV:ITGB3. Plays an important role in the regulation of cell survival, cell division, cell differentiation and cell migration. Functions as a potent mitogen in vitro. Can induce angiogenesis. Mediates phosphorylation of ERK1/2 and thereby promotes retinal lens fiber differentiation. In Homo sapiens (Human), this protein is Fibroblast growth factor 2 (FGF2).